Consider the following 151-residue polypeptide: Nucleoside diphosphate kinase (151 aa).

ATP is bound by residues Lys-9, Phe-57, Arg-85, Thr-91, Arg-102, and Asn-112. His-115 serves as the catalytic Pros-phosphohistidine intermediate.

Belongs to the NDK family. The cofactor is Mg(2+).

It localises to the cytoplasm. It catalyses the reaction a 2'-deoxyribonucleoside 5'-diphosphate + ATP = a 2'-deoxyribonucleoside 5'-triphosphate + ADP. The enzyme catalyses a ribonucleoside 5'-diphosphate + ATP = a ribonucleoside 5'-triphosphate + ADP. Its function is as follows. Major role in the synthesis of nucleoside triphosphates other than ATP. The ATP gamma phosphate is transferred to the NDP beta phosphate via a ping-pong mechanism, using a phosphorylated active-site intermediate. In Archaeoglobus fulgidus (strain ATCC 49558 / DSM 4304 / JCM 9628 / NBRC 100126 / VC-16), this protein is Nucleoside diphosphate kinase.